A 492-amino-acid polypeptide reads, in one-letter code: Trypanothione reductase (492 aa).

35 to 52 (DVQTHHGPPHYAALGGTC) lines the FAD pocket. C52 and C57 form a disulfide bridge. H461 (proton acceptor) is an active-site residue.

This sequence belongs to the class-I pyridine nucleotide-disulfide oxidoreductase family. As to quaternary structure, homodimer. The cofactor is FAD.

It is found in the cytoplasm. It catalyses the reaction trypanothione + NADP(+) = trypanothione disulfide + NADPH + H(+). Functionally, trypanothione is the parasite analog of glutathione; this enzyme is the equivalent of glutathione reductase. This chain is Trypanothione reductase (TPR), found in Trypanosoma brucei brucei.